A 384-amino-acid polypeptide reads, in one-letter code: 8-amino-7-oxononanoate synthase (384 aa).

R21 is a substrate binding site. 108–109 contacts pyridoxal 5'-phosphate; it reads GF. H133 is a substrate binding site. S179, H207, and T233 together coordinate pyridoxal 5'-phosphate. Residue K236 is modified to N6-(pyridoxal phosphate)lysine. T352 serves as a coordination point for substrate.

Belongs to the class-II pyridoxal-phosphate-dependent aminotransferase family. BioF subfamily. In terms of assembly, homodimer. It depends on pyridoxal 5'-phosphate as a cofactor.

It carries out the reaction 6-carboxyhexanoyl-[ACP] + L-alanine + H(+) = (8S)-8-amino-7-oxononanoate + holo-[ACP] + CO2. The protein operates within cofactor biosynthesis; biotin biosynthesis. Its function is as follows. Catalyzes the decarboxylative condensation of pimeloyl-[acyl-carrier protein] and L-alanine to produce 8-amino-7-oxononanoate (AON), [acyl-carrier protein], and carbon dioxide. The protein is 8-amino-7-oxononanoate synthase of Shigella dysenteriae serotype 1 (strain Sd197).